Reading from the N-terminus, the 246-residue chain is uncharacterized protein (246 aa).

Belongs to the BtpA family.

This is an uncharacterized protein from Archaeoglobus fulgidus (strain ATCC 49558 / DSM 4304 / JCM 9628 / NBRC 100126 / VC-16).